Consider the following 304-residue polypeptide: Glycine--tRNA ligase alpha subunit (304 aa).

Belongs to the class-II aminoacyl-tRNA synthetase family. In terms of assembly, tetramer of two alpha and two beta subunits.

The protein localises to the cytoplasm. It carries out the reaction tRNA(Gly) + glycine + ATP = glycyl-tRNA(Gly) + AMP + diphosphate. This Yersinia pseudotuberculosis serotype O:1b (strain IP 31758) protein is Glycine--tRNA ligase alpha subunit.